Consider the following 30-residue polypeptide: L-amino-acid oxidase (30 aa).

The protein belongs to the flavin monoamine oxidase family. FIG1 subfamily. As to quaternary structure, monomer. This is in contrast with most of its orthologs, that are non-covalently linked homodimers. FAD serves as cofactor. N-glycosylated. In terms of tissue distribution, expressed by the venom gland.

The protein localises to the secreted. It catalyses the reaction an L-alpha-amino acid + O2 + H2O = a 2-oxocarboxylate + H2O2 + NH4(+). It carries out the reaction L-leucine + O2 + H2O = 4-methyl-2-oxopentanoate + H2O2 + NH4(+). The catalysed reaction is L-phenylalanine + O2 + H2O = 3-phenylpyruvate + H2O2 + NH4(+). The enzyme catalyses L-tryptophan + O2 + H2O = indole-3-pyruvate + H2O2 + NH4(+). It catalyses the reaction L-methionine + O2 + H2O = 4-methylsulfanyl-2-oxobutanoate + H2O2 + NH4(+). It carries out the reaction L-2-aminohexanoate + O2 + H2O = 2-oxohexanoate + H2O2 + NH4(+). The catalysed reaction is L-tyrosine + O2 + H2O = 3-(4-hydroxyphenyl)pyruvate + H2O2 + NH4(+). Catalyzes an oxidative deamination of predominantly hydrophobic and aromatic L-amino acids, thus producing hydrogen peroxide that may contribute to the diverse toxic effects of this enzyme. Is highly active against L-Met, L-Leu, L-norleucine (L-2-aminohexanoate), L-Trp, L-Phe, moderately active against L-Tyr, and no active on L-Gly, L-Ala, L-Val, L-Pro, L-His, L-Lys, L-Arg, L-Asp, L-Asn, L-Gln, L-Glu, L-Ser, and L-Thr. Exhibits diverse biological activities, such as hemorrhage, hemolysis, edema, antibacterial and antiparasitic activities. In addition, this protein induces apoptosis. It also interacts with endothelial cells, and inhibits collagen- and ADP-induced platelet aggregation. L-LAAO family effects on platelets are controversial, since it either induces aggregation or inhibits agonist-induced aggregation. These different effects are probably due to different experimental conditions. This Bothrops leucurus (Whitetail lancehead) protein is L-amino-acid oxidase.